The chain runs to 200 residues: MAKFIQHIGLVAPLDAANVDTDAIIPKQFLQKVTRTGFGQHLFNDWRFLDDAGKVPNPDFVLNLPRYQGATILLARENFGCGSSREHAPWALTDFGFKVVIAPSFADIFYGNAFNNQLLPVTLSEADVDTLFQLVKENEGIEFVVDLEQQTVNAGGKSYAFEIDPFRRHCMINGLDSIGLTLQHEHNISAYEKQQPEFLR.

This sequence belongs to the LeuD family. LeuD type 1 subfamily. Heterodimer of LeuC and LeuD.

It catalyses the reaction (2R,3S)-3-isopropylmalate = (2S)-2-isopropylmalate. The protein operates within amino-acid biosynthesis; L-leucine biosynthesis; L-leucine from 3-methyl-2-oxobutanoate: step 2/4. In terms of biological role, catalyzes the isomerization between 2-isopropylmalate and 3-isopropylmalate, via the formation of 2-isopropylmaleate. This Yersinia pseudotuberculosis serotype O:1b (strain IP 31758) protein is 3-isopropylmalate dehydratase small subunit.